The following is a 182-amino-acid chain: uncharacterized protein (182 aa).

2 helical membrane-spanning segments follow: residues 58 to 78 (ILFG…YVVY) and 81 to 101 (PVSI…IIIW).

It to M.jannaschii MJ0803.

The protein localises to the cell membrane. This is an uncharacterized protein from Methanocaldococcus jannaschii (strain ATCC 43067 / DSM 2661 / JAL-1 / JCM 10045 / NBRC 100440) (Methanococcus jannaschii).